We begin with the raw amino-acid sequence, 88 residues long: HEMRFVQRVRCWEYRQQPSIVRLVRPTRPDKARRLGYKAKQGFVVYRVRVRRGGRKRPVPKVLCMVNPQTRELLNSSSRGATVLLLRS.

It belongs to the eukaryotic ribosomal protein eL15 family.

This chain is Large ribosomal subunit protein eL15 (RPL15), found in Brassica napus (Rape).